Here is a 377-residue protein sequence, read N- to C-terminus: Chaperone protein DnaJ (377 aa).

One can recognise a J domain in the interval 4–69 (DYYEALGVTR…QKRAAYDRFG (66 aa)). The segment at 135-213 (GKTAQIRVPT…CHGQGRVTQE (79 aa)) adopts a CR-type zinc-finger fold. Zn(2+)-binding residues include Cys-148, Cys-151, Cys-165, Cys-168, Cys-187, Cys-190, Cys-201, and Cys-204. 4 CXXCXGXG motif repeats span residues 148-155 (CDECSGSG), 165-172 (CTMCSGSG), 187-194 (CPGCNGRG), and 201-208 (CEKCHGQG).

It belongs to the DnaJ family. As to quaternary structure, homodimer. Requires Zn(2+) as cofactor.

It is found in the cytoplasm. In terms of biological role, participates actively in the response to hyperosmotic and heat shock by preventing the aggregation of stress-denatured proteins and by disaggregating proteins, also in an autonomous, DnaK-independent fashion. Unfolded proteins bind initially to DnaJ; upon interaction with the DnaJ-bound protein, DnaK hydrolyzes its bound ATP, resulting in the formation of a stable complex. GrpE releases ADP from DnaK; ATP binding to DnaK triggers the release of the substrate protein, thus completing the reaction cycle. Several rounds of ATP-dependent interactions between DnaJ, DnaK and GrpE are required for fully efficient folding. Also involved, together with DnaK and GrpE, in the DNA replication of plasmids through activation of initiation proteins. In Brucella canis (strain ATCC 23365 / NCTC 10854 / RM-666), this protein is Chaperone protein DnaJ.